The chain runs to 314 residues: 4-hydroxy-3-methylbut-2-enyl diphosphate reductase (314 aa).

Residue Cys12 participates in [4Fe-4S] cluster binding. (2E)-4-hydroxy-3-methylbut-2-enyl diphosphate contacts are provided by His41 and His74. His41 and His74 together coordinate dimethylallyl diphosphate. Isopentenyl diphosphate contacts are provided by His41 and His74. Position 96 (Cys96) interacts with [4Fe-4S] cluster. His124 serves as a coordination point for (2E)-4-hydroxy-3-methylbut-2-enyl diphosphate. His124 is a binding site for dimethylallyl diphosphate. His124 lines the isopentenyl diphosphate pocket. Glu126 serves as the catalytic Proton donor. Thr167 provides a ligand contact to (2E)-4-hydroxy-3-methylbut-2-enyl diphosphate. Cys197 is a binding site for [4Fe-4S] cluster. (2E)-4-hydroxy-3-methylbut-2-enyl diphosphate is bound by residues Ser225, Ser226, Asn227, and Ser269. Dimethylallyl diphosphate-binding residues include Ser225, Ser226, Asn227, and Ser269. Isopentenyl diphosphate-binding residues include Ser225, Ser226, Asn227, and Ser269.

It belongs to the IspH family. Requires [4Fe-4S] cluster as cofactor.

The catalysed reaction is isopentenyl diphosphate + 2 oxidized [2Fe-2S]-[ferredoxin] + H2O = (2E)-4-hydroxy-3-methylbut-2-enyl diphosphate + 2 reduced [2Fe-2S]-[ferredoxin] + 2 H(+). It carries out the reaction dimethylallyl diphosphate + 2 oxidized [2Fe-2S]-[ferredoxin] + H2O = (2E)-4-hydroxy-3-methylbut-2-enyl diphosphate + 2 reduced [2Fe-2S]-[ferredoxin] + 2 H(+). It participates in isoprenoid biosynthesis; dimethylallyl diphosphate biosynthesis; dimethylallyl diphosphate from (2E)-4-hydroxy-3-methylbutenyl diphosphate: step 1/1. It functions in the pathway isoprenoid biosynthesis; isopentenyl diphosphate biosynthesis via DXP pathway; isopentenyl diphosphate from 1-deoxy-D-xylulose 5-phosphate: step 6/6. Functionally, catalyzes the conversion of 1-hydroxy-2-methyl-2-(E)-butenyl 4-diphosphate (HMBPP) into a mixture of isopentenyl diphosphate (IPP) and dimethylallyl diphosphate (DMAPP). Acts in the terminal step of the DOXP/MEP pathway for isoprenoid precursor biosynthesis. The protein is 4-hydroxy-3-methylbut-2-enyl diphosphate reductase of Pseudoalteromonas atlantica (strain T6c / ATCC BAA-1087).